Here is a 452-residue protein sequence, read N- to C-terminus: Lysine-rich nucleolar protein 1 (452 aa).

Disordered stretches follow at residues 1–28, 55–161, and 184–305; these read MITKAHKGEVGLGLPEKKKKKKKVVKEP, VIQE…AFSG, and REQA…PDTD. Lys-7 participates in a covalent cross-link: Glycyl lysine isopeptide (Lys-Gly) (interchain with G-Cter in SUMO2). A compositionally biased stretch (basic residues) spans 65-75; the sequence is LVKKKKKKKGH. Over residues 78-98 the composition is skewed to basic and acidic residues; it reads ICEEHLEPEITLRAGRTERSH. At Ser-112 the chain carries Phosphoserine. Lys-126 is covalently cross-linked (Glycyl lysine isopeptide (Lys-Gly) (interchain with G-Cter in SUMO2)). Residues 127–139 are compositionally biased toward basic and acidic residues; the sequence is TSPDPRQDEEVTR. Phosphoserine is present on Ser-128. 2 stretches are compositionally biased toward basic residues: residues 140 to 151 and 258 to 267; these read VGKKLKKHKKEK and SVKKKVKSKK. Position 258 is a phosphoserine (Ser-258). Lys-280 is covalently cross-linked (Glycyl lysine isopeptide (Lys-Gly) (interchain with G-Cter in SUMO2)). The span at 293–305 shows a compositional bias: acidic residues; that stretch reads VAEEPWEEEPDTD. The tract at residues 300 to 452 is interaction with ZNF106; sequence EEPDTDLEVV…NASKSIKFED (153 aa). A Phosphothreonine modification is found at Thr-304. Residues Lys-313, Lys-347, Lys-367, Lys-369, and Lys-401 each participate in a glycyl lysine isopeptide (Lys-Gly) (interchain with G-Cter in SUMO2) cross-link. Arg-424 carries the post-translational modification Omega-N-methylarginine. Residue Lys-436 forms a Glycyl lysine isopeptide (Lys-Gly) (interchain with G-Cter in SUMO2) linkage.

Interacts with ZNF106.

It is found in the nucleus. It localises to the nucleolus. In Bos taurus (Bovine), this protein is Lysine-rich nucleolar protein 1 (KNOP1).